The sequence spans 1867 residues: TATA-binding protein-associated factor MOT1 (1867 aa).

S93 bears the Phosphoserine mark. The disordered stretch occupies residues 169–228; that stretch reads KTDDIKQETSMLNASDKANENKSNANKKSARMLAMARRKKKMSAKNTPKHPVDITESSVS. The segment covering 181-203 has biased composition (low complexity); it reads NASDKANENKSNANKKSARMLAM. A Nuclear localization signal motif is present at residues 195-211; it reads KKSARMLAMARRKKKMS. 3 HEAT repeats span residues 289 to 326, 445 to 482, and 541 to 578; these read WQFQ…KHAY, GLLE…EFVK, and WSFK…IKDD. S677 is modified (phosphoserine). HEAT repeat units follow at residues 1108–1145 and 1188–1225; these read SEVF…ISSV and PYVI…LVPL. The Helicase ATP-binding domain occupies 1284-1457; sequence AFLNKYHLHG…WSLFDFLMPG (174 aa). 1297–1304 is an ATP binding site; it reads DDMGLGKT. Residues 1408 to 1411 carry the DEGH box motif; sequence DEGH. One copy of the HEAT 6 repeat lies at 1495–1537; it reads ALHKQVLPFMLRRLKEDVLSDLPPKIIQDYYCELGDLQKQLYM. Positions 1639–1787 constitute a Helicase C-terminal domain; the sequence is PIQNVISQHR…STVVNQQNSG (149 aa). The tract at residues 1802–1822 is disordered; it reads PDNVTSQDNEEKNNGDSQAAK.

Belongs to the SNF2/RAD54 helicase family. Forms a complex with TBP which binds TATA DNA with high affinity but with altered specificity.

Its subcellular location is the mitochondrion. It is found in the nucleus. Functionally, regulates transcription in association with TATA binding protein (TBP). Removes TBP from the TATA box via its C-terminal ATPase activity. Both transcription activation and repression require its ATPase activity. The polypeptide is TATA-binding protein-associated factor MOT1 (MOT1) (Saccharomyces cerevisiae (strain ATCC 204508 / S288c) (Baker's yeast)).